Reading from the N-terminus, the 516-residue chain is Cytochrome P450 monooxygenase lcsI (516 aa).

A helical membrane pass occupies residues 20-42 (ICVAAGCAFALSLLYLYVRALYL). Residues N131, N184, N415, N420, and N442 are each glycosylated (N-linked (GlcNAc...) asparagine). C456 contacts heme.

It belongs to the cytochrome P450 family. Heme is required as a cofactor.

The protein resides in the membrane. The protein operates within secondary metabolite biosynthesis. Its function is as follows. Cytochrome P450 monooxygenase; part of the gene cluster that mediates the biosynthesis of the lipopeptide antibiotics leucinostatins that show extensive biological activities, including antimalarial, antiviral, antibacterial, antifungal, and antitumor activities, as well as phytotoxic. Leucinostatin A contains nine amino acid residues, including the unusual amino acid 4-methyl-L-proline (MePro), 2-amino-6-hydroxy-4-methyl-8-oxodecanoic acid (AHyMeOA), 3-hydroxyleucine (HyLeu), alpha-aminoisobutyric acid (AIB), beta-Ala, a 4-methylhex-2-enoic acid at the N-terminus as well as a N1,N1-dimethylpropane-1,2-diamine (DPD) at the C-terminus. The biosynthesis of leucinostatins is probably initiated with the assembly of 4-methylhex-2-enoic acid by a reducing PKS. Two reducing polyketide synthases, lcsB and lcsC, have been identified in the cluster and it is not clear which is the one that assembles 4-methylhex-2-enoic acid since both contain KS, AT, DH, cMT, ER, KR and ACP domains. The polyketide residue might be transferred to the NRPS lcsA, mediated by two additional enzymes, the acyl-CoA ligase lcsD and the thioesterase lcsE. The linear polyketide carboxylic acid, which is released from PKS, is converted to a CoA thioester by lcsD, and then lcsE hydrolyzes the thiol bond and shuttles the polyketide intermediate to lcsA. The C domain of the first module catalyzed the condensation of 4-methylhex-2-enoic acid and MePro carried by domain A1, followed by successive condensations of nine amino acids to trigger the elongation of the linear peptide. A5 and A6 domains of lcsA are proposed to incorporate leucine, A2 AHyMeOA, and A3 incorporates HyLeu. A4, A7 and A8 incorporate AIB. The AHyMeOA in leucinostatin A activated by the A2 might be produced by the second PKS (lcsB or lcsC) present within the cluster. The MePro is probably produced via leucine cyclization and may originate from a separate pathway, independent of the cluster. Another nonproteinogenic amino acid, beta-Ala, could be produced by an aspartic acid decarboxylase also localized outside of the cluster. Two candidates are VFPBJ_01400 and VFPBJ_10476. The final peptide scaffold may be released by the NAD(P)H-dependent thioester reductase (TE) at the C-terminal region of lcsA. Transamination of the lcsA product by the transaminase lcsP may produce DPD at the C-terminus. Further hydroxylation steps performed alternatively by the cytochrome P450 monooxygenases lcsI, lcsK and lcsN then yield the non-methylated leucinostatins precursor. It is also possible that leucines can be hydroxylated prior to their incorporation into the peptide. Varying extents of methylation then lead to the formation of leucinostatins A and B. The sequence is that of Cytochrome P450 monooxygenase lcsI from Purpureocillium lilacinum (Paecilomyces lilacinus).